The chain runs to 430 residues: MKQALRVAFGFLILWASVLHAEVRIVIDSGVDSGRPIGVVPFQWAGPGAAPEDIGGIVAADLRNSGKFNPLDRARLPQQPGSAQEVQPAAWSALGIDAVVVGQVTPNPDGSYNVAYQLVDTGGAPGTVLAQNSYKVNKQWLRYAGHTASDEVFEKLTGIKGAFRTRIAYVVQTNGGQFPYELRVSDYDGYNQFVVHRSPQPLMSPAWSPDGSKLAYVTFESGRSALVIQTLANGAVRQVASFPRHNGAPAFSPDGSKLAFALSKTGSLNLYVMDLASGQIRQVTDGRSNNTEPTWFPDSQNLAFTSDLAGRPQVYKVNINGGAPQRITWEGSQNQDADVSSDGKFMVMVSSNGGQQHIAKQDLATGGVQVLSSTFLDETPSLAPNGTMVIYSSSQGMGSVLNLVSTDGRFKARLPATDGQVKFPAWSPYL.

A signal peptide spans 1–21; the sequence is MKQALRVAFGFLILWASVLHA.

It belongs to the TolB family. In terms of assembly, the Tol-Pal system is composed of five core proteins: the inner membrane proteins TolA, TolQ and TolR, the periplasmic protein TolB and the outer membrane protein Pal. They form a network linking the inner and outer membranes and the peptidoglycan layer.

It localises to the periplasm. Its function is as follows. Part of the Tol-Pal system, which plays a role in outer membrane invagination during cell division and is important for maintaining outer membrane integrity. TolB occupies a key intermediary position in the Tol-Pal system because it communicates directly with both membrane-embedded components, Pal in the outer membrane and TolA in the inner membrane. In Shigella flexneri serotype 5b (strain 8401), this protein is Tol-Pal system protein TolB.